The sequence spans 127 residues: Glycine cleavage system H protein 1 (127 aa).

The 82-residue stretch at 20–101 (SVTVGITPYA…LGAGWFFRFI (82 aa)) folds into the Lipoyl-binding domain. N6-lipoyllysine is present on K60.

This sequence belongs to the GcvH family. As to quaternary structure, the glycine cleavage system is composed of four proteins: P, T, L and H. It depends on (R)-lipoate as a cofactor.

In terms of biological role, the glycine cleavage system catalyzes the degradation of glycine. The H protein shuttles the methylamine group of glycine from the P protein to the T protein. In Pseudomonas syringae pv. tomato (strain ATCC BAA-871 / DC3000), this protein is Glycine cleavage system H protein 1.